The primary structure comprises 371 residues: 4-hydroxyphenylpyruvate dioxygenase-like protein (371 aa).

VOC domains are found at residues 7–135 and 160–328; these read RLCH…LLER and RVDH…VFTK. Fe cation is bound by residues histidine 163, histidine 258, and glutamate 339.

The protein belongs to the 4HPPD family. Fe cation is required as a cofactor.

It localises to the mitochondrion. The enzyme catalyses 3-(4-hydroxyphenyl)pyruvate + O2 = (S)-4-hydroxymandelate + CO2. Its function is as follows. Iron-dependent dioxygenase that catalyzes the conversion of 4-hydroxyphenylpyruvate (4-HPPA) to 4-hydroxymandelate (4-HMA) in the mitochondria, one of the steps in the biosynthesis of coenzyme Q10 from tyrosine. The polypeptide is 4-hydroxyphenylpyruvate dioxygenase-like protein (Homo sapiens (Human)).